Reading from the N-terminus, the 121-residue chain is Small ribosomal subunit protein bS16m (121 aa).

It belongs to the bacterial ribosomal protein bS16 family. As to quaternary structure, component of the mitochondrial small ribosomal subunit (mt-SSU). Mature yeast 74S mitochondrial ribosomes consist of a small (37S) and a large (54S) subunit. The 37S small subunit contains a 15S ribosomal RNA (15S mt-rRNA) and 34 different proteins. The 54S large subunit contains a 21S rRNA (21S mt-rRNA) and 46 different proteins.

The protein resides in the mitochondrion. Component of the mitochondrial ribosome (mitoribosome), a dedicated translation machinery responsible for the synthesis of mitochondrial genome-encoded proteins, including at least some of the essential transmembrane subunits of the mitochondrial respiratory chain. The mitoribosomes are attached to the mitochondrial inner membrane and translation products are cotranslationally integrated into the membrane. The sequence is that of Small ribosomal subunit protein bS16m (MRPS16) from Saccharomyces cerevisiae (strain ATCC 204508 / S288c) (Baker's yeast).